We begin with the raw amino-acid sequence, 102 residues long: Small ribosomal subunit protein uS10 (102 aa).

This sequence belongs to the universal ribosomal protein uS10 family. In terms of assembly, part of the 30S ribosomal subunit.

Involved in the binding of tRNA to the ribosomes. The protein is Small ribosomal subunit protein uS10 of Methanoculleus marisnigri (strain ATCC 35101 / DSM 1498 / JR1).